Reading from the N-terminus, the 38-residue chain is Conotoxin r7a (38 aa).

The propeptide occupies 1 to 5; sequence APAKR. Tryptophan 6 is subject to 6'-bromotryptophan. 2 positions are modified to 4-carboxyglutamate: glutamate 10 and glutamate 11. Intrachain disulfides connect cysteine 12–cysteine 26, cysteine 19–cysteine 30, and cysteine 25–cysteine 35. Residue tryptophan 15 is modified to 6'-bromotryptophan. 4-carboxyglutamate is present on residues glutamate 20 and glutamate 31. 6'-bromotryptophan is present on tryptophan 38.

The protein belongs to the conotoxin O2 superfamily. In terms of tissue distribution, expressed by the venom duct.

Its subcellular location is the secreted. In terms of biological role, induces a sleep-like state in mice. This Conus radiatus (Rayed cone) protein is Conotoxin r7a.